A 344-amino-acid chain; its full sequence is Protein RecA (344 aa).

Residue 65–72 (GPESSGKT) coordinates ATP. Positions 323–337 (ELREKFQPAEAPREA) are enriched in basic and acidic residues. Residues 323–344 (ELREKFQPAEAPREAGDDEDKE) are disordered.

Belongs to the RecA family.

The protein localises to the cytoplasm. Can catalyze the hydrolysis of ATP in the presence of single-stranded DNA, the ATP-dependent uptake of single-stranded DNA by duplex DNA, and the ATP-dependent hybridization of homologous single-stranded DNAs. It interacts with LexA causing its activation and leading to its autocatalytic cleavage. The polypeptide is Protein RecA (Xanthomonas axonopodis pv. citri (strain 306)).